The following is a 907-amino-acid chain: Lateral signaling target protein 2 homolog (907 aa).

5 disordered regions span residues 339 to 395 (SSDN…DPAN), 463 to 604 (LTDS…SGDA), 662 to 688 (NSSPPEPEDPPEPAANSTDKPKEPDPA), 716 to 756 (EVNA…SENG), and 770 to 834 (GSGG…EERR). Residues 351-361 (DISSFYTSNNR) are compositionally biased toward polar residues. A compositionally biased stretch (acidic residues) spans 367–393 (EPNEDDDVSESNDEDEDEGEEVDEDDP). Polar residues-rich tracts occupy residues 463-475 (LTDSGLGTANPSL) and 486-495 (PVTSSHPIAQ). A compositionally biased stretch (acidic residues) spans 501–516 (SEEEGEVDEYDEDDSE). Positions 525-549 (HHTKHQRRHRHHHHHHRKHYSKHRS) are enriched in basic residues. Over residues 550-565 (SAAGSAGTSGTTCSAA) the composition is skewed to low complexity. Positions 568–580 (QISSCDTSPSSGG) are enriched in polar residues. Positions 592–602 (GSSGNSSGGSG) are enriched in gly residues. A compositionally biased stretch (polar residues) spans 742–751 (APRTMMTTAA). Residues 777 to 793 (GSSRSSQERSVSLSETS) show a composition bias toward low complexity. Residues 816-826 (PKSVQSEQSGQ) show a composition bias toward polar residues. The segment at 845–905 (DGDAPRCMAC…VCRECFVREV (61 aa)) adopts an FYVE-type zinc-finger fold. Residues C851, C854, C867, C870, C875, C878, C897, and C900 each coordinate Zn(2+).

Belongs to the lst-2 family.

Its function is as follows. Negative regulator of epidermal growth factor receptor (EGFR) signaling. This chain is Lateral signaling target protein 2 homolog, found in Culex quinquefasciatus (Southern house mosquito).